Consider the following 110-residue polypeptide: U-scoloptoxin(16)-Er7a (110 aa).

The signal sequence occupies residues 1 to 26 (MTSTRKLSVSCLIVFMVSSLIAVSSG).

This sequence belongs to the scoloptoxin-16 family. Contains 4 disulfide bonds. In terms of tissue distribution, expressed by the venom gland.

The protein localises to the secreted. In Ethmostigmus rubripes (Giant centipede), this protein is U-scoloptoxin(16)-Er7a.